The primary structure comprises 242 residues: Phosphate import ATP-binding protein PstB 1 (242 aa).

One can recognise an ABC transporter domain in the interval methionine 1–isoleucine 237. Glycine 28–serine 35 serves as a coordination point for ATP.

Belongs to the ABC transporter superfamily. Phosphate importer (TC 3.A.1.7) family. In terms of assembly, the complex is composed of two ATP-binding proteins (PstB), two transmembrane proteins (PstC and PstA) and a solute-binding protein (PstS).

It localises to the cell membrane. The catalysed reaction is phosphate(out) + ATP + H2O = ADP + 2 phosphate(in) + H(+). Functionally, part of the ABC transporter complex PstSACB involved in phosphate import. Responsible for energy coupling to the transport system. The sequence is that of Phosphate import ATP-binding protein PstB 1 from Symbiobacterium thermophilum (strain DSM 24528 / JCM 14929 / IAM 14863 / T).